The sequence spans 93 residues: Phosphoribosyl-ATP pyrophosphatase (93 aa).

The protein belongs to the PRA-PH family.

Its subcellular location is the cytoplasm. It carries out the reaction 1-(5-phospho-beta-D-ribosyl)-ATP + H2O = 1-(5-phospho-beta-D-ribosyl)-5'-AMP + diphosphate + H(+). It functions in the pathway amino-acid biosynthesis; L-histidine biosynthesis; L-histidine from 5-phospho-alpha-D-ribose 1-diphosphate: step 2/9. This chain is Phosphoribosyl-ATP pyrophosphatase, found in Mycolicibacterium smegmatis (strain ATCC 700084 / mc(2)155) (Mycobacterium smegmatis).